The following is an 83-amino-acid chain: Large ribosomal subunit protein bL27 (83 aa).

The disordered stretch occupies residues 1 to 26 (MAHKKAGGSSKNGRDSRGQRRGVKRF).

Belongs to the bacterial ribosomal protein bL27 family.

The sequence is that of Large ribosomal subunit protein bL27 from Desulfosudis oleivorans (strain DSM 6200 / JCM 39069 / Hxd3) (Desulfococcus oleovorans).